The primary structure comprises 794 residues: Ent-copalyl diphosphate synthase 2 (794 aa).

The N-terminal 35 residues, 1 to 35 (MSSSSNVTSLPRLTTAGGVFPREMVRVHSSCNILR), are a transit peptide targeting the chloroplast. Lys238 contacts substrate. Mg(2+)-binding residues include Asp369 and Asp371. Residues 369–372 (DVDD) carry the DXDD motif motif. Lys455 provides a ligand contact to substrate.

The protein belongs to the terpene synthase family. Tpsc subfamily. It depends on Mg(2+) as a cofactor. Expressed in leaves.

Its subcellular location is the plastid. The protein localises to the chloroplast. It catalyses the reaction (2E,6E,10E)-geranylgeranyl diphosphate = ent-copalyl diphosphate. Its pathway is secondary metabolite biosynthesis; terpenoid biosynthesis. Functionally, involved in the biosynthesis of ent-kaurene diterpenoids natural products such as oridonin, miltiradiene, eriocalyxin B and nezukol, known to exhibit antitumor, anti-inflammatory and antibacterial activities. Catalyzes the conversion of (2E,6E,10E)-geranylgeranyl diphosphate (GGPP) to ent-copalyl diphosphate (ent-CPP). The sequence is that of Ent-copalyl diphosphate synthase 2 from Isodon eriocalyx (Plectranthus eriocalyx).